A 529-amino-acid chain; its full sequence is Keratin, type II cytoskeletal 74 (529 aa).

The segment at 1–139 (MSRQLNIKSS…DPEIQKVRAQ (139 aa)) is head. Residues 140-175 (EREQIKVLNDKFASFIDKVRFLEQQNQVLETKWELL) are coil 1A. Residues 140-453 (EREQIKVLND…KLLEGEECRM (314 aa)) enclose the IF rod domain. Positions 176–194 (QQLDLNNCKKNLEPILEGY) are linker 1. Positions 195–286 (ISNLRKQLET…CLYDAEIAQI (92 aa)) are coil 1B. Positions 287 to 310 (QTHASETSVILSMDNNRDLDLDSI) are linker 12. A coil 2 region spans residues 311–449 (IAEVRMHYEE…ATYRKLLEGE (139 aa)). The segment at 450 to 529 (ECRMSGENPS…ASIPARKATR (80 aa)) is tail. Residues 484 to 500 (GASAVAGSSGSTQSGQT) show a composition bias toward low complexity. Positions 484 to 529 (GASAVAGSSGSTQSGQTKTTEARGGDLKDTQGKSTPASIPARKATR) are disordered. The span at 503 to 514 (TEARGGDLKDTQ) shows a compositional bias: basic and acidic residues. T513 bears the Phosphothreonine mark.

This sequence belongs to the intermediate filament family. Heterotetramer of two type I and two type II keratins. Highly expressed in hair follicles from scalp. In hair, it is specifically present in the inner root sheath (IRS) of the hair follicle. Present in the IRS Huxley layer, but not in Henle layer or cuticle of the IRS. In the IRS Huxley layer, it is expressed in specialized Huxley cells, termed 'Fluegelzellen, along the area of differentiated Henle cells (at protein level).

Functionally, has a role in hair formation. Specific component of keratin intermediate filaments in the inner root sheath (IRS) of the hair follicle. The protein is Keratin, type II cytoskeletal 74 (KRT74) of Homo sapiens (Human).